The sequence spans 1070 residues: Carbamoyl phosphate synthase large chain (1070 aa).

The interval 1-401 (MPKRDDIKTI…ALLKAVRSLE (401 aa)) is carboxyphosphate synthetic domain. 12 residues coordinate ATP: Arg129, Arg169, Gly175, Gly176, Lys208, Ile210, Glu215, Gly241, Ile242, His243, Gln284, and Glu298. Residues 133-327 (RDLMNELGEP…IAKLAAKIAV (195 aa)) enclose the ATP-grasp 1 domain. Residues Gln284, Glu298, and Asn300 each contribute to the Mg(2+) site. The Mn(2+) site is built by Gln284, Glu298, and Asn300. The segment at 402 to 546 (IGADHLLLEE…YSTYEEENES (145 aa)) is oligomerization domain. Residues 547–929 (TRSAKESVIV…ALYKGFVASG (383 aa)) are carbamoyl phosphate synthetic domain. Residues 671–861 (EKALEILQIP…MANVATRVIL (191 aa)) form the ATP-grasp 2 domain. Positions 707, 746, 748, 752, 777, 778, 779, 780, 820, and 832 each coordinate ATP. Positions 820, 832, and 834 each coordinate Mg(2+). Mn(2+) contacts are provided by Gln820, Glu832, and Asn834. The region spanning 930–1070 (TTMHDYGTVL…SEVKQPKARV (141 aa)) is the MGS-like domain. The segment at 930 to 1070 (TTMHDYGTVL…SEVKQPKARV (141 aa)) is allosteric domain.

This sequence belongs to the CarB family. As to quaternary structure, composed of two chains; the small (or glutamine) chain promotes the hydrolysis of glutamine to ammonia, which is used by the large (or ammonia) chain to synthesize carbamoyl phosphate. Tetramer of heterodimers (alpha,beta)4. Requires Mg(2+) as cofactor. It depends on Mn(2+) as a cofactor.

It carries out the reaction hydrogencarbonate + L-glutamine + 2 ATP + H2O = carbamoyl phosphate + L-glutamate + 2 ADP + phosphate + 2 H(+). It catalyses the reaction hydrogencarbonate + NH4(+) + 2 ATP = carbamoyl phosphate + 2 ADP + phosphate + 2 H(+). Its pathway is amino-acid biosynthesis; L-arginine biosynthesis; carbamoyl phosphate from bicarbonate: step 1/1. It functions in the pathway pyrimidine metabolism; UMP biosynthesis via de novo pathway; (S)-dihydroorotate from bicarbonate: step 1/3. In terms of biological role, large subunit of the glutamine-dependent carbamoyl phosphate synthetase (CPSase). CPSase catalyzes the formation of carbamoyl phosphate from the ammonia moiety of glutamine, carbonate, and phosphate donated by ATP, constituting the first step of 2 biosynthetic pathways, one leading to arginine and/or urea and the other to pyrimidine nucleotides. The large subunit (synthetase) binds the substrates ammonia (free or transferred from glutamine from the small subunit), hydrogencarbonate and ATP and carries out an ATP-coupled ligase reaction, activating hydrogencarbonate by forming carboxy phosphate which reacts with ammonia to form carbamoyl phosphate. In Listeria monocytogenes serotype 4a (strain HCC23), this protein is Carbamoyl phosphate synthase large chain.